The sequence spans 252 residues: MRILQLPALRDNYIYLLHDPETATAAVVDPTVAEPVLDKLAELGAELVAIFNTHHHHDHVGGNLQLLARYPRAVVYGSQADRGRIPGQTVELQAGETVAFAGRQAKVLFVPGHTRGHVAYYFPESGDLFCGDTLFAGGCGRLFEGTPEQMLGSLDQLRQLPEATRVWCAHEYTLNNLKFALTVDGDNPDLQARYQQVVALRQAGSPTVPSTIGEERRTNPFLRWDQPALRAATGAQDPVRVFARLRGMKDQF.

Residues histidine 54, histidine 56, aspartate 58, histidine 59, histidine 113, aspartate 132, and histidine 170 each contribute to the Zn(2+) site.

Belongs to the metallo-beta-lactamase superfamily. Glyoxalase II family. Monomer. Zn(2+) serves as cofactor.

It catalyses the reaction an S-(2-hydroxyacyl)glutathione + H2O = a 2-hydroxy carboxylate + glutathione + H(+). The protein operates within secondary metabolite metabolism; methylglyoxal degradation; (R)-lactate from methylglyoxal: step 2/2. Thiolesterase that catalyzes the hydrolysis of S-D-lactoyl-glutathione to form glutathione and D-lactic acid. The protein is Hydroxyacylglutathione hydrolase of Synechococcus sp. (strain JA-3-3Ab) (Cyanobacteria bacterium Yellowstone A-Prime).